The sequence spans 1226 residues: Methionine synthase (1226 aa).

The Hcy-binding domain occupies 6-326; sequence RQQIEAQLKQ…EHIRQMAQAV (321 aa). Residues Cys-248, Cys-311, and Cys-312 each contribute to the Zn(2+) site. The 262-residue stretch at 357–618 folds into the Pterin-binding domain; that stretch reads FINVGERTNV…VPEKLREAVE (262 aa). One can recognise a B12-binding N-terminal domain in the interval 651–745; that stretch reads SALEWRTWPV…FINAEKQSGS (95 aa). Methylcob(III)alamin-binding positions include Glu-695, 757–761, His-760, Ser-805, Thr-809, and Ala-861; that span reads GDVHD. The region spanning 747–882 is the B12-binding domain; that stretch reads NGKILLATVK…SDERRPAFIE (136 aa). Residues 898 to 1226 form the AdoMet activation domain; that stretch reads KKPRTKPVTL…EKWLGPNING (329 aa). S-adenosyl-L-methionine is bound by residues Asp-948, Arg-1136, and 1191–1192; that span reads YF.

It belongs to the vitamin-B12 dependent methionine synthase family. Requires methylcob(III)alamin as cofactor. It depends on Zn(2+) as a cofactor.

It catalyses the reaction (6S)-5-methyl-5,6,7,8-tetrahydrofolate + L-homocysteine = (6S)-5,6,7,8-tetrahydrofolate + L-methionine. It participates in amino-acid biosynthesis; L-methionine biosynthesis via de novo pathway; L-methionine from L-homocysteine (MetH route): step 1/1. Functionally, catalyzes the transfer of a methyl group from methyl-cobalamin to homocysteine, yielding enzyme-bound cob(I)alamin and methionine. Subsequently, remethylates the cofactor using methyltetrahydrofolate. In Vibrio parahaemolyticus serotype O3:K6 (strain RIMD 2210633), this protein is Methionine synthase (metH).